A 188-amino-acid chain; its full sequence is Elongation factor P (188 aa).

At lysine 34 the chain carries N6-(3,6-diaminohexanoyl)-5-hydroxylysine.

Belongs to the elongation factor P family. May be beta-lysylated on the epsilon-amino group of Lys-34 by the combined action of EpmA and EpmB, and then hydroxylated on the C5 position of the same residue by EpmC (if this protein is present). Lysylation is critical for the stimulatory effect of EF-P on peptide-bond formation. The lysylation moiety may extend toward the peptidyltransferase center and stabilize the terminal 3-CCA end of the tRNA. Hydroxylation of the C5 position on Lys-34 may allow additional potential stabilizing hydrogen-bond interactions with the P-tRNA.

The protein resides in the cytoplasm. The protein operates within protein biosynthesis; polypeptide chain elongation. Its function is as follows. Involved in peptide bond synthesis. Alleviates ribosome stalling that occurs when 3 or more consecutive Pro residues or the sequence PPG is present in a protein, possibly by augmenting the peptidyl transferase activity of the ribosome. Modification of Lys-34 is required for alleviation. The chain is Elongation factor P from Xylella fastidiosa (strain M23).